The primary structure comprises 723 residues: Protein Aster-A (723 aa).

Over residues 1–18 the composition is skewed to low complexity; the sequence is MFDTTPHSGRSSPSSSPS. The interval 1-63 is disordered; sequence MFDTTPHSGR…SGVSGTLSTQ (63 aa). The span at 28-38 shows a compositional bias: pro residues; that stretch reads PSRPPSAPEPE. The GRAM domain occupies 93 to 160; it reads EDFRKLFSKL…KEVTCLKKEK (68 aa). The disordered stretch occupies residues 257–337; the sequence is SPSGAADRSQ…DGPTSNLGPL (81 aa). Serine 265, serine 269, and serine 273 each carry phosphoserine. The span at 302–314 shows a compositional bias: polar residues; sequence DSQLDASSSQTVT. In terms of domain architecture, VASt spans 370–541; that stretch reads SGRLLINSVF…ELAKAEKVSL (172 aa). The residue at position 418 (serine 418) is a Phosphoserine. Residues 562-601 are disordered; the sequence is LSWRGHRDGPQHPDPDPCTQTSMHTSGSLSSRFSEPSVDQ. Basic and acidic residues predominate over residues 566 to 576; that stretch reads GHRDGPQHPDP. A compositionally biased stretch (polar residues) spans 579 to 595; the sequence is CTQTSMHTSGSLSSRFS. The chain crosses the membrane as a helical span at residues 610–630; sequence ALVLISIVLIVLIALNALLFY.

The protein localises to the endoplasmic reticulum membrane. Its subcellular location is the cell membrane. It is found in the cytoplasmic vesicle. It localises to the autophagosome. In terms of biological role, cholesterol transporter that mediates non-vesicular transport of cholesterol from the plasma membrane (PM) to the endoplasmic reticulum (ER). Contains unique domains for binding cholesterol and the PM, thereby serving as a molecular bridge for the transfer of cholesterol from the PM to the ER. Plays a crucial role in cholesterol homeostasis and has the unique ability to localize to the PM based on the level of membrane cholesterol. In lipid-poor conditions localizes to the ER membrane and in response to excess cholesterol in the PM is recruited to the endoplasmic reticulum-plasma membrane contact sites (EPCS) which is mediated by the GRAM domain. At the EPCS, the sterol-binding VASt/ASTER domain binds to the cholesterol in the PM and facilitates its transfer from the PM to ER. May play a role in tumor progression. Plays a role in autophagy regulation and is required for biogenesis of the autophagosome. This function in autophagy requires its cholesterol-transfer activity. This chain is Protein Aster-A, found in Rattus norvegicus (Rat).